A 512-amino-acid chain; its full sequence is Maturase K (512 aa).

It belongs to the intron maturase 2 family. MatK subfamily.

The protein resides in the plastid. It localises to the chloroplast. Its function is as follows. Usually encoded in the trnK tRNA gene intron. Probably assists in splicing its own and other chloroplast group II introns. In Amorphophallus paeoniifolius (Whitespot giant arum), this protein is Maturase K.